The sequence spans 330 residues: Methionyl-tRNA formyltransferase (330 aa).

116 to 119 (SLLP) serves as a coordination point for (6S)-5,6,7,8-tetrahydrofolate.

The protein belongs to the Fmt family.

It carries out the reaction L-methionyl-tRNA(fMet) + (6R)-10-formyltetrahydrofolate = N-formyl-L-methionyl-tRNA(fMet) + (6S)-5,6,7,8-tetrahydrofolate + H(+). Its function is as follows. Attaches a formyl group to the free amino group of methionyl-tRNA(fMet). The formyl group appears to play a dual role in the initiator identity of N-formylmethionyl-tRNA by promoting its recognition by IF2 and preventing the misappropriation of this tRNA by the elongation apparatus. This Nitratidesulfovibrio vulgaris (strain DP4) (Desulfovibrio vulgaris) protein is Methionyl-tRNA formyltransferase.